We begin with the raw amino-acid sequence, 330 residues long: Ig gamma-2A chain C region, A allele (330 aa).

3 consecutive Ig-like domains span residues 6-98 (PSVY…KKIE), 121-220 (PSVF…RTIS), and 229-325 (PQVY…KSFS). 3 cysteine pairs are disulfide-bonded: Cys27–Cys82, Cys144–Cys204, and Cys250–Cys308. N-linked (GlcNAc...) asparagine glycosylation occurs at Asn180.

The protein is Ig gamma-2A chain C region, A allele (Ighg) of Mus musculus (Mouse).